Reading from the N-terminus, the 501-residue chain is Aspartate--tRNA ligase, cytoplasmic (501 aa).

Thr-52 carries the post-translational modification Phosphothreonine. N6-acetyllysine is present on Lys-74. Glu-229 provides a ligand contact to L-aspartate. Ser-249 is subject to Phosphoserine. Residues 251–254 (QLYK) are aspartate. Arg-273 is a binding site for L-aspartate. ATP contacts are provided by residues 273 to 275 (RAE) and 281 to 283 (RHL). Position 374 is an N6-acetyllysine (Lys-374). Positions 411 to 415 (KQSNS) are binding site for the 3'-end of tRNA. Position 424 (Glu-424) interacts with ATP. The L-aspartate site is built by Ser-427 and Arg-431. 472–475 (GLER) contributes to the ATP binding site. Thr-500 is subject to Phosphothreonine; by PKA.

The protein belongs to the class-II aminoacyl-tRNA synthetase family. Type 2 subfamily. As to quaternary structure, homodimer. Part of a multisubunit complex that groups tRNA ligases for Arg (RARS1), Asp (DARS1), Gln (QARS1), Ile (IARS1), Leu (LARS1), Lys (KARS1), Met (MARS1) the bifunctional ligase for Glu and Pro (EPRS1) and the auxiliary subunits AIMP1/p43, AIMP2/p38 and EEF1E1/p18.

It is found in the cytoplasm. The catalysed reaction is tRNA(Asp) + L-aspartate + ATP = L-aspartyl-tRNA(Asp) + AMP + diphosphate. Its function is as follows. Catalyzes the specific attachment of an amino acid to its cognate tRNA in a 2 step reaction: the amino acid (AA) is first activated by ATP to form AA-AMP and then transferred to the acceptor end of the tRNA. The polypeptide is Aspartate--tRNA ligase, cytoplasmic (DARS1) (Bos taurus (Bovine)).